A 132-amino-acid polypeptide reads, in one-letter code: Inactive D-aminoacyl-tRNA deacylase (132 aa).

This sequence belongs to the DTD family.

In terms of biological role, a non-functional D-aminoacyl-tRNA deacylase. The sequence is that of Inactive D-aminoacyl-tRNA deacylase from Bacillus subtilis (strain 168).